The chain runs to 89 residues: Cornifin (89 aa).

The disordered stretch occupies residues 1-29; the sequence is MSSQQQKQPCTPPPQLQQQQVKQPCQPPP. Residue Ser2 is modified to N-acetylserine. 8 repeat units span residues 3–14, 18–29, 31–38, 39–46, 47–54, 55–62, 63–70, and 71–78. The 2 X 12 AA approximate repeats stretch occupies residues 3 to 29; sequence SQQQKQPCTPPPQLQQQQVKQPCQPPP. A 6 X 8 AA approximate tandem repeats region spans residues 31 to 78; it reads EPCIPKTKEPCLPKVPEPCHPKVPEPCQPKVPEPCHPKVPEPCPSTVT. The interval 68 to 89 is disordered; the sequence is KVPEPCPSTVTPAPAQQKTKQK. The span at 75 to 89 shows a compositional bias: polar residues; it reads STVTPAPAQQKTKQK.

This sequence belongs to the cornifin (SPRR) family.

The protein localises to the cytoplasm. Functionally, cross-linked envelope protein of keratinocytes. It is a keratinocyte protein that first appears in the cell cytosol, but ultimately becomes cross-linked to membrane proteins by transglutaminase. All that results in the formation of an insoluble envelope beneath the plasma membrane. The chain is Cornifin (SPRR1) from Macaca mulatta (Rhesus macaque).